A 257-amino-acid chain; its full sequence is MEKFFITDNTTDNTTDNTTDNTTDNTTDKLTDNNSIDNDKINKNITVDSLTNDLNKLSLKSPSDKSSSGKSSIPNKSLVPNKSLVPSKIFFSKTTFFKIKLDEIMSCHNITISDLNSIKNKIESKNLQIDEINTIIIGKILKKLGLYKYHGHEQYILNIIIGKPVQKMSSQEKNLIMKLFDQVLVTFNLLKKKYNWNNFLHYGYLIYQLCKLLEYNDFLDNIALPNNETIIYVNNQAWKKICSHNNWIYYEISQIKN.

2 disordered regions span residues 1–35 (MEKFFITDNTTDNTTDNTTDNTTDNTTDKLTDNNS) and 58–77 (SLKSPSDKSSSGKSSIPNKS). Low complexity predominate over residues 7–25 (TDNTTDNTTDNTTDNTTDN). The segment covering 26 to 35 (TTDKLTDNNS) has biased composition (basic and acidic residues).

This sequence belongs to the nucleo-cytoplasmic large DNA viruses (NCLDVs) VLTF-3 family.

Putative transcription factor. This chain is Putative transcription factor R430, found in Acanthamoeba polyphaga (Amoeba).